Here is a 666-residue protein sequence, read N- to C-terminus: Transmembrane protein 201 (666 aa).

At Met-1 the chain carries N-acetylmethionine. Residues 1–213 (MEGVSALLAR…FSSAVKSPVQ (213 aa)) are Nuclear-facing. A helical transmembrane segment spans residues 214-234 (VILLRALAFLACAFLLTTALY). Residues 235 to 297 (GASGHFAPGT…EAWAFGQSHQ (63 aa)) lie on the Perinuclear space side of the membrane. The chain crosses the membrane as a helical span at residues 298–318 (TGVVALGLLTCLLAMLLAGRI). Residues 319-322 (RLRR) lie on the Nuclear side of the membrane. The helical transmembrane segment at 323 to 343 (IDAFCTCLWALLLGLHLAEQH) threads the bilayer. The Perinuclear space portion of the chain corresponds to 344 to 356 (LQAASPSWLDTLK). A helical membrane pass occupies residues 357 to 374 (FSTTSLCCLVGFTAAVAT). Over 375-644 (RKATGPRRFR…GRFGPSLVRG (270 aa)) the chain is Nuclear. 7 positions are modified to phosphoserine: Ser-441, Ser-444, Ser-450, Ser-454, Ser-466, Ser-477, and Ser-480. Residues 502-581 (PLPSPAPSVA…PPHVPRKPPL (80 aa)) are disordered. The segment covering 508-520 (PSVAGSVASSSGS) has biased composition (low complexity). Ser-529 is modified (phosphoserine). The helical transmembrane segment at 645–665 (LLAVSLAANALFTSVFLYQSL) threads the bilayer. Residue Arg-666 is a topological domain, perinuclear space.

Belongs to the TMEM201 family. In terms of assembly, interacts with SUN2 and LMNA. May bind to Ran GTPase; has a greater affinity for Ran-GTP over Ran-GDP. Interacts with EMD.

It is found in the nucleus inner membrane. The protein resides in the cytoplasm. Its subcellular location is the cytoskeleton. It localises to the spindle pole. Functionally, critical regulator of angiogenesis and endothelial cell (EC) migration. Promotes the migration of endothelial cells, which is essential for angiogenesis. Interacts with the linker of nucleoskeleton and cytoskeleton (LINC) complex, which plays a vital role in connecting the cell's cytoskeleton to the nuclear envelope. This interaction is essential for maintaining cellular structure and facilitating the movement of endothelial cells, which is critical for proper vascular development. Involved in nuclear movement during fibroblast polarization and migration. Overexpression can recruit Ran GTPase to the nuclear periphery. May define a distinct membrane domain in the vicinity of the mitotic spindle. Involved in the organization of the nuclear envelope implicating EMD, SUN1 and A-type lamina. The sequence is that of Transmembrane protein 201 (TMEM201) from Homo sapiens (Human).